The chain runs to 187 residues: tRNA (cytidine(56)-2'-O)-methyltransferase (187 aa).

S-adenosyl-L-methionine is bound by residues Leu-94 and 120 to 124 (GAEKV).

The protein belongs to the aTrm56 family. As to quaternary structure, homodimer.

It is found in the cytoplasm. It catalyses the reaction cytidine(56) in tRNA + S-adenosyl-L-methionine = 2'-O-methylcytidine(56) in tRNA + S-adenosyl-L-homocysteine + H(+). Its function is as follows. Specifically catalyzes the AdoMet-dependent 2'-O-ribose methylation of cytidine at position 56 in tRNAs. The chain is tRNA (cytidine(56)-2'-O)-methyltransferase from Hyperthermus butylicus (strain DSM 5456 / JCM 9403 / PLM1-5).